Here is a 136-residue protein sequence, read N- to C-terminus: Histone H3.3C (136 aa).

Over residues 1–10 the composition is skewed to polar residues; the sequence is MALTKQTARK. The segment at 1 to 44 is disordered; that stretch reads MALTKQTARKSTGGKAPRKQLATKATRKSAPSTGGVKKPHRYRP. Thr4 bears the Phosphothreonine; by HASPIN mark. Lys5 carries the post-translational modification Allysine; alternate. Position 5 is an N6,N6,N6-trimethyllysine; alternate (Lys5). An N6,N6-dimethyllysine; alternate modification is found at Lys5. N6-(2-hydroxyisobutyryl)lysine; alternate is present on Lys5. Residue Lys5 is modified to N6-(beta-hydroxybutyryl)lysine; alternate. Lys5 bears the N6-acetyllysine; alternate mark. Lys5 is subject to N6-methyllysine; alternate. A 5-glutamyl dopamine; alternate modification is found at Gln6. The residue at position 6 (Gln6) is a 5-glutamyl serotonin; alternate. Thr7 is subject to Phosphothreonine; by PKC. At Arg9 the chain carries Citrulline; alternate. Arg9 is subject to Symmetric dimethylarginine; by PRMT5; alternate. Lys10 is subject to N6,N6,N6-trimethyllysine; alternate. N6,N6-dimethyllysine; alternate is present on Lys10. An N6-(2-hydroxyisobutyryl)lysine; alternate modification is found at Lys10. Lys10 is modified (N6-(beta-hydroxybutyryl)lysine; alternate). Position 10 is an N6-acetyllysine; alternate (Lys10). Lys10 carries the post-translational modification N6-methyllysine; alternate. Lys10 bears the N6-lactoyllysine; alternate mark. Ser11 is modified (ADP-ribosylserine; alternate). Ser11 is subject to Phosphoserine; alternate; by AURKB, AURKC, RPS6KA3, RPS6KA4 and RPS6KA5. Thr12 carries the post-translational modification Phosphothreonine; by PKC. Position 15 is an N6-(2-hydroxyisobutyryl)lysine; alternate (Lys15). Residue Lys15 is modified to N6-(beta-hydroxybutyryl)lysine; alternate. Position 15 is an N6-acetyllysine; alternate (Lys15). Position 15 is an N6-lactoyllysine; alternate (Lys15). Lys15 is modified (N6-glutaryllysine; alternate). Lys15 carries the post-translational modification N6-succinyllysine; alternate. Position 18 is a citrulline; alternate (Arg18). Arg18 carries the asymmetric dimethylarginine; by CARM1; alternate modification. N6-(2-hydroxyisobutyryl)lysine; alternate occurs at positions 19 and 24. N6-(beta-hydroxybutyryl)lysine; alternate is present on residues Lys19 and Lys24. An N6-acetyllysine; alternate mark is found at Lys19 and Lys24. An N6-methyllysine; alternate mark is found at Lys19 and Lys24. Residues Lys19 and Lys24 each carry the N6-lactoyllysine; alternate modification. N6-glutaryllysine; alternate is present on residues Lys19 and Lys24. Lys19 and Lys24 each carry N6-butyryllysine; alternate. Arg27 bears the Citrulline mark. Lys28 bears the N6,N6,N6-trimethyllysine; alternate mark. The residue at position 28 (Lys28) is an N6,N6-dimethyllysine; alternate. Lys28 carries the N6-(2-hydroxyisobutyryl)lysine; alternate modification. Lys28 carries the N6-acetyllysine; alternate modification. An N6-methyllysine; alternate modification is found at Lys28. Lys28 carries the N6-lactoyllysine; alternate modification. Lys28 bears the N6-glutaryllysine; alternate mark. Ser29 bears the ADP-ribosylserine; alternate mark. A Phosphoserine; alternate; by AURKB, AURKC and RPS6KA5 modification is found at Ser29. Ser32 carries the phosphoserine modification. At Lys37 the chain carries N6,N6,N6-trimethyllysine; alternate. Residue Lys37 is modified to N6,N6-dimethyllysine; alternate. Lys37 is modified (N6-(2-hydroxyisobutyryl)lysine; alternate). Lys37 bears the N6-acetyllysine; alternate mark. N6-methyllysine; alternate is present on Lys37. Lys38 bears the N6-methyllysine mark. Position 42 is a phosphotyrosine (Tyr42). Lys57 is modified (N6,N6,N6-trimethyllysine; alternate). An N6-(2-hydroxyisobutyryl)lysine; alternate modification is found at Lys57. An N6-(beta-hydroxybutyryl)lysine; alternate modification is found at Lys57. Lys57 carries the N6-acetyllysine; alternate modification. Position 57 is an N6-lactoyllysine; alternate (Lys57). Lys57 bears the N6-glutaryllysine; alternate mark. Lys57 carries the N6-succinyllysine; alternate modification. Lys57 is modified (N6-methyllysine; by EHMT2; alternate). Residue Ser58 is modified to Phosphoserine. Lys65 and Lys80 each carry N6-(2-hydroxyisobutyryl)lysine; alternate. Residues Lys65 and Lys80 each carry the N6-methyllysine; alternate modification. An N6,N6,N6-trimethyllysine; alternate modification is found at Lys80. Residue Lys80 is modified to N6,N6-dimethyllysine; alternate. N6-acetyllysine; alternate is present on Lys80. An N6-lactoyllysine; alternate modification is found at Lys80. Lys80 is modified (N6-glutaryllysine; alternate). Lys80 carries the post-translational modification N6-succinyllysine; alternate. At Thr81 the chain carries Phosphothreonine. Phosphoserine is present on Ser87. Thr108 carries the phosphothreonine modification. N6-acetyllysine; alternate occurs at positions 116 and 123. N6-glutaryllysine; alternate is present on residues Lys116 and Lys123. Lys123 carries the N6-(2-hydroxyisobutyryl)lysine; alternate modification. Lys123 bears the N6-methyllysine; alternate mark. The residue at position 123 (Lys123) is an N6-succinyllysine; alternate.

This sequence belongs to the histone H3 family. As to quaternary structure, the nucleosome is a histone octamer containing two molecules each of H2A, H2B, H3 and H4 assembled in one H3-H4 heterotetramer and two H2A-H2B heterodimers. The octamer wraps approximately 147 bp of DNA. Post-translationally, acetylation is generally linked to gene activation. Acetylation on Lys-10 (H3K9ac) impairs methylation at Arg-9 (H3R8me2s). Acetylation on Lys-19 (H3K18ac) and Lys-24 (H3K24ac) favors methylation at Arg-18 (H3R17me). Acetylation at Lys-123 (H3K122ac) by EP300/p300 plays a central role in chromatin structure: localizes at the surface of the histone octamer and stimulates transcription, possibly by promoting nucleosome instability. In terms of processing, citrullination at Arg-9 (H3R8ci) and/or Arg-18 (H3R17ci) by PADI4 impairs methylation and represses transcription. Butyrylation of histones marks active promoters and competes with histone acetylation. It is present during late spermatogenesis. Post-translationally, asymmetric dimethylation at Arg-18 (H3R17me2a) by CARM1 is linked to gene activation. Symmetric dimethylation at Arg-9 (H3R8me2s) by PRMT5 is linked to gene repression. In terms of processing, methylation at Lys-5 (H3K4me), Lys-37 and Lys-80 are linked to gene activation. Methylation at Lys-5 (H3K4me) facilitates subsequent acetylation of H3 and H4. Methylation at Lys-80 is associated with DNA double-strand break (DSB) responses and is a specific target for TP53BP1. Methylation at Lys-10 (H3K9me) and Lys-28 (H3K27me) are linked to gene repression. Methylation at Lys-10 (H3K9me) is a specific target for HP1 proteins (CBX1, CBX3 and CBX5) and prevents subsequent phosphorylation at Ser-11 (H3S10ph) and acetylation of H3 and H4. Methylation at Lys-5 (H3K4me) and Lys-80 require preliminary monoubiquitination of H2B at 'Lys-120'. Methylation at Lys-10 (H3K9me) and Lys-28 (H3K27me) are enriched in inactive X chromosome chromatin. Monomethylation at Lys-57 (H3K56me1) by EHMT2/G9A in G1 phase promotes interaction with PCNA and is required for DNA replication. Phosphorylated at Thr-4 (H3T3ph) by HASPIN during prophase and dephosphorylated during anaphase. Phosphorylation at Ser-11 (H3S10ph) by AURKB is crucial for chromosome condensation and cell-cycle progression during mitosis and meiosis. In addition phosphorylation at Ser-11 (H3S10ph) by RPS6KA4 and RPS6KA5 is important during interphase because it enables the transcription of genes following external stimulation, like mitogens, stress, growth factors or UV irradiation and result in the activation of genes, such as c-fos and c-jun. Phosphorylation at Ser-11 (H3S10ph), which is linked to gene activation, prevents methylation at Lys-10 (H3K9me) but facilitates acetylation of H3 and H4. Phosphorylation at Ser-11 (H3S10ph) by AURKB mediates the dissociation of HP1 proteins (CBX1, CBX3 and CBX5) from heterochromatin. Phosphorylation at Ser-11 (H3S10ph) is also an essential regulatory mechanism for neoplastic cell transformation. Phosphorylated at Ser-29 (H3S28ph) by MAP3K20 isoform 1, RPS6KA5 or AURKB during mitosis or upon ultraviolet B irradiation. Phosphorylation at Thr-7 (H3T6ph) by PRKCB is a specific tag for epigenetic transcriptional activation that prevents demethylation of Lys-5 (H3K4me) by LSD1/KDM1A. At centromeres, specifically phosphorylated at Thr-12 (H3T11ph) from prophase to early anaphase, by DAPK3 and PKN1. Phosphorylation at Thr-12 (H3T11ph) by PKN1 or isoform M2 of PKM (PKM2) is a specific tag for epigenetic transcriptional activation that promotes demethylation of Lys-10 (H3K9me) by KDM4C/JMJD2C. Phosphorylation at Tyr-42 (H3Y41ph) by JAK2 promotes exclusion of CBX5 (HP1 alpha) from chromatin. Post-translationally, lysine deamination at Lys-5 (H3K4all) to form allysine is mediated by LOXL2. Allysine formation by LOXL2 only takes place on H3K4me3 and results in gene repression. In terms of processing, succinylation at Lys-80 (H3K79succ) by KAT2A takes place with a maximum frequency around the transcription start sites of genes. It gives a specific tag for epigenetic transcription activation. Desuccinylation at Lys-123 (H3K122succ) by SIRT7 in response to DNA damage promotes chromatin condensation and double-strand breaks (DSBs) repair. Serine ADP-ribosylation constitutes the primary form of ADP-ribosylation of proteins in response to DNA damage. Serine ADP-ribosylation at Ser-11 (H3S10ADPr) is mutually exclusive with phosphorylation at Ser-11 (H3S10ph) and impairs acetylation at Lys-10 (H3K9ac).

It localises to the nucleus. The protein resides in the chromosome. In terms of biological role, core component of nucleosome. Nucleosomes wrap and compact DNA into chromatin, limiting DNA accessibility to the cellular machineries which require DNA as a template. Histones thereby play a central role in transcription regulation, DNA repair, DNA replication and chromosomal stability. DNA accessibility is regulated via a complex set of post-translational modifications of histones, also called histone code, and nucleosome remodeling. The sequence is that of Histone H3.3C from Mus musculus (Mouse).